The following is a 278-amino-acid chain: Orotidine 5'-phosphate decarboxylase (278 aa).

Lys95 acts as the Proton donor in catalysis.

This sequence belongs to the OMP decarboxylase family. Type 2 subfamily.

The enzyme catalyses orotidine 5'-phosphate + H(+) = UMP + CO2. The protein operates within pyrimidine metabolism; UMP biosynthesis via de novo pathway; UMP from orotate: step 2/2. This Corynebacterium glutamicum (strain R) protein is Orotidine 5'-phosphate decarboxylase.